The primary structure comprises 291 residues: Prepilin leader peptidase/N-methyltransferase (291 aa).

The chain crosses the membrane as a helical span at residues 14–34 (LYFSLVFLFSLMIGSFLNVVI). Positions 75, 78, 100, and 103 each coordinate Zn(2+). Transmembrane regions (helical) follow at residues 107 to 127 (ISARYPLVELLTALLSVVVAM), 131 to 151 (PGWGTLAALLLTWVLVALTFI), 162 to 182 (LTLPLLWGGLLFNLLGGYVPL), 186 to 206 (VIGAMAGYLVLWSLYWAFKLL), 232 to 252 (LPIVLLLSSLVGAIFGIGLIL), and 262 to 282 (IPFGPYLAIAGWIALLWGDSI).

Belongs to the peptidase A24 family. The cofactor is Zn(2+).

It is found in the cell inner membrane. The enzyme catalyses Typically cleaves a -Gly-|-Phe- bond to release an N-terminal, basic peptide of 5-8 residues from type IV prepilin, and then N-methylates the new N-terminal amino group, the methyl donor being S-adenosyl-L-methionine.. In terms of biological role, plays an essential role in type IV pili and type II pseudopili formation by proteolytically removing the leader sequence from substrate proteins and subsequently monomethylating the alpha-amino group of the newly exposed N-terminal phenylalanine. The sequence is that of Prepilin leader peptidase/N-methyltransferase (tapD) from Aeromonas salmonicida (strain A449).